A 499-amino-acid polypeptide reads, in one-letter code: Thioredoxin reductase 1, cytoplasmic (499 aa).

Residues 18 to 23, 42 to 43, 58 to 59, and 63 to 67 each bind FAD; these read IGGGSG, DF, TC, and GCIPK. An intrachain disulfide couples C59 to C64. Position 68 is an N6-succinyllysine (K68). Y131 carries the phosphotyrosine modification. FAD-binding positions include 131–132 and T161; that span reads YG. NADP(+) contacts are provided by residues R166, 198–204, 221–222, R226, 226–228, 291–293, and K315; these read ASYVALE, RS, RGF, and VGR. Y200 is an FAD binding site. FAD contacts are provided by residues D334, 341 to 343, and H472; that span reads ELT. E341 contributes to the NADP(+) binding site. The Proton acceptor role is filled by H472. Residues 497 to 498 constitute a cross-link (cysteinyl-selenocysteine (Cys-Sec)); that stretch reads CU. Residue U498 is a non-standard amino acid, selenocysteine.

This sequence belongs to the class-I pyridine nucleotide-disulfide oxidoreductase family. Homodimer. It depends on FAD as a cofactor. ISGylated.

It localises to the cytoplasm. The catalysed reaction is [thioredoxin]-dithiol + NADP(+) = [thioredoxin]-disulfide + NADPH + H(+). It carries out the reaction H2O2 + NADPH + H(+) = NADP(+) + 2 H2O. Reduces disulfideprotein thioredoxin (Trx) to its dithiol-containing form. Homodimeric flavoprotein involved in the regulation of cellular redox reactions, growth and differentiation. Contains a selenocysteine residue at the C-terminal active site that is essential for catalysis. Also has reductase activity on hydrogen peroxide (H2O2). This Rattus norvegicus (Rat) protein is Thioredoxin reductase 1, cytoplasmic.